Consider the following 140-residue polypeptide: MLMPKRTKYRRPHRVSFEGKAKGKNVIVNGNYALVAKEGAFITNKQIEACRIAMNRYMKRTGKVWINIFPHLSLTKKPLEVRMGSGKGSPEEWVAVVKTGKVLFEVKDTSNSEKVEMEALRLASHKLPIKTKIVKKGVQV.

It belongs to the universal ribosomal protein uL16 family. Part of the 50S ribosomal subunit.

Its function is as follows. Binds 23S rRNA and is also seen to make contacts with the A and possibly P site tRNAs. The protein is Large ribosomal subunit protein uL16 of Phytoplasma australiense.